Reading from the N-terminus, the 381-residue chain is Succinyl-diaminopimelate desuccinylase (381 aa).

Histidine 69 contributes to the Zn(2+) binding site. The active site involves aspartate 71. Aspartate 103 provides a ligand contact to Zn(2+). Glutamate 137 functions as the Proton acceptor in the catalytic mechanism. Residues glutamate 138, glutamate 166, and histidine 355 each contribute to the Zn(2+) site.

The protein belongs to the peptidase M20A family. DapE subfamily. As to quaternary structure, homodimer. Requires Zn(2+) as cofactor. Co(2+) serves as cofactor.

The catalysed reaction is N-succinyl-(2S,6S)-2,6-diaminopimelate + H2O = (2S,6S)-2,6-diaminopimelate + succinate. Its pathway is amino-acid biosynthesis; L-lysine biosynthesis via DAP pathway; LL-2,6-diaminopimelate from (S)-tetrahydrodipicolinate (succinylase route): step 3/3. Its function is as follows. Catalyzes the hydrolysis of N-succinyl-L,L-diaminopimelic acid (SDAP), forming succinate and LL-2,6-diaminopimelate (DAP), an intermediate involved in the bacterial biosynthesis of lysine and meso-diaminopimelic acid, an essential component of bacterial cell walls. This is Succinyl-diaminopimelate desuccinylase from Rickettsia africae (strain ESF-5).